We begin with the raw amino-acid sequence, 238 residues long: 3-dehydroquinate dehydratase (238 aa).

Residues 35-37 and Arg70 contribute to the 3-dehydroquinate site; that span reads ELR. His133 serves as the catalytic Proton donor/acceptor. Residue Lys160 is the Schiff-base intermediate with substrate of the active site. 3-dehydroquinate-binding residues include Arg202 and Gln225.

The protein belongs to the type-I 3-dehydroquinase family. Homodimer.

It catalyses the reaction 3-dehydroquinate = 3-dehydroshikimate + H2O. It participates in metabolic intermediate biosynthesis; chorismate biosynthesis; chorismate from D-erythrose 4-phosphate and phosphoenolpyruvate: step 3/7. Functionally, involved in the third step of the chorismate pathway, which leads to the biosynthesis of aromatic amino acids. Catalyzes the cis-dehydration of 3-dehydroquinate (DHQ) and introduces the first double bond of the aromatic ring to yield 3-dehydroshikimate. The polypeptide is 3-dehydroquinate dehydratase (Staphylococcus aureus (strain USA300)).